Here is a 599-residue protein sequence, read N- to C-terminus: Elongation factor 4 (599 aa).

One can recognise a tr-type G domain in the interval 2–184; sequence KHIRNFSIIA…RLVRDIPAPE (183 aa). Residues 14–19 and 131–134 contribute to the GTP site; these read DHGKST and NKID.

It belongs to the TRAFAC class translation factor GTPase superfamily. Classic translation factor GTPase family. LepA subfamily.

It is found in the cell inner membrane. The enzyme catalyses GTP + H2O = GDP + phosphate + H(+). Its function is as follows. Required for accurate and efficient protein synthesis under certain stress conditions. May act as a fidelity factor of the translation reaction, by catalyzing a one-codon backward translocation of tRNAs on improperly translocated ribosomes. Back-translocation proceeds from a post-translocation (POST) complex to a pre-translocation (PRE) complex, thus giving elongation factor G a second chance to translocate the tRNAs correctly. Binds to ribosomes in a GTP-dependent manner. The polypeptide is Elongation factor 4 (Yersinia pestis bv. Antiqua (strain Antiqua)).